The chain runs to 156 residues: Ribosomal RNA large subunit methyltransferase H (156 aa).

Residues leucine 72, glycine 103, and leucine 122–leucine 127 each bind S-adenosyl-L-methionine.

This sequence belongs to the RNA methyltransferase RlmH family. In terms of assembly, homodimer.

It is found in the cytoplasm. It catalyses the reaction pseudouridine(1915) in 23S rRNA + S-adenosyl-L-methionine = N(3)-methylpseudouridine(1915) in 23S rRNA + S-adenosyl-L-homocysteine + H(+). In terms of biological role, specifically methylates the pseudouridine at position 1915 (m3Psi1915) in 23S rRNA. This chain is Ribosomal RNA large subunit methyltransferase H, found in Dechloromonas aromatica (strain RCB).